Here is a 389-residue protein sequence, read N- to C-terminus: Large envelope protein (389 aa).

M1 carries the N-acetylmethionine modification. The N-myristoyl glycine; by host moiety is linked to residue G2. The segment at 2 to 108 is pre-S1; sequence GTNLSVPNPL…PPLRDTHPQA (107 aa). Positions 2–163 are pre-S; that stretch reads GTNLSVPNPL…LSTTGDPVPN (162 aa). The Virion surface; in external conformation portion of the chain corresponds to 2 to 170; it reads GTNLSVPNPL…VPNMENIASG (169 aa). Residues 2 to 242 are Intravirion; in internal conformation-facing; it reads GTNLSVPNPL…PGYRWMCLRR (241 aa). The segment at 109 to 163 is pre-S2; it reads MQWNSTTFHQTLQDPRVRALYFPAGGSSSGTVNPVQNTASSISSILSTTGDPVPN. Residues 171 to 191 traverse the membrane as a helical segment; the sequence is LLGPLLVLQAGFFSLTKILTI. Residues 192-242 are Intravirion; in external conformation-facing; the sequence is PLSLDSWWTSLNFLGETPVCLGQNSQSQISSHSPTCCPPICPGYRWMCLRR. A helical transmembrane segment spans residues 243 to 263; that stretch reads FIIFLCILLLCLIFLLVLLDY. Over 264–337 the chain is Virion surface; the sequence is QGMLPVCPLI…WASVRFSWLS (74 aa). N309 is a glycosylation site (N-linked (GlcNAc...) asparagine; by host). Residues 338–358 traverse the membrane as a helical segment; that stretch reads LLVPFVQWFVGLSPTVWLSVI. Residues 359-364 are Intravirion-facing; that stretch reads WMMWFW. A helical membrane pass occupies residues 365 to 387; it reads GPSLYNILSPFMPLLPIFFCLWV. Over 388–389 the chain is Virion surface; the sequence is YI.

It belongs to the orthohepadnavirus major surface antigen family. In terms of assembly, interacts (via its myristoylated pre-S1 region) with the host SLC10A1/NTCP; this interaction is essential for viral entry. As to quaternary structure, in its internal form (Li-HBsAg), interacts with the capsid protein and with the isoform S. Interacts with host chaperone CANX. Associates with host chaperone CANX through its pre-S2 N glycan; this association may be essential for isoform M proper secretion. In terms of assembly, interacts with isoform L. Interacts with the antigens of satellite virus HDV (HDVAgs); this interaction is required for encapsidation of HDV genomic RNA. In terms of processing, isoform M is N-terminally acetylated by host at a ratio of 90%, and N-glycosylated by host at the pre-S2 region. Myristoylated; this modification is essential for its interaction with the host protein SLC10A1/NTCP.

It is found in the virion membrane. In terms of biological role, the large envelope protein exists in two topological conformations, one which is termed 'external' or Le-HBsAg and the other 'internal' or Li-HBsAg. In its external conformation the protein attaches the virus to cell receptors and thereby initiating infection. This interaction determines the species specificity and liver tropism. This attachment induces virion internalization predominantly through caveolin-mediated endocytosis. The large envelope protein also assures fusion between virion membrane and endosomal membrane. In its internal conformation the protein plays a role in virion morphogenesis and mediates the contact with the nucleocapsid like a matrix protein. Its function is as follows. The middle envelope protein plays an important role in the budding of the virion. It is involved in the induction of budding in a nucleocapsid independent way. In this process the majority of envelope proteins bud to form subviral lipoprotein particles of 22 nm of diameter that do not contain a nucleocapsid. This chain is Large envelope protein, found in Hepatitis B virus genotype B2 (isolate Indonesia/pIDW420/1988) (HBV-B).